The chain runs to 175 residues: Granulocyte colony-stimulating factor (175 aa).

Cystine bridges form between Cys37–Cys43 and Cys65–Cys75. Thr134 is a glycosylation site (O-linked (GalNAc...) threonine).

Belongs to the IL-6 superfamily. In terms of assembly, monomer. O-glycosylated.

The protein resides in the secreted. In terms of biological role, granulocyte/macrophage colony-stimulating factors are cytokines that act in hematopoiesis by controlling the production, differentiation, and function of 2 related white cell populations of the blood, the granulocytes and the monocytes-macrophages. This CSF induces granulocytes. In Canis lupus familiaris (Dog), this protein is Granulocyte colony-stimulating factor (CSF3).